We begin with the raw amino-acid sequence, 251 residues long: Malonyl-[acyl-carrier protein] O-methyltransferase (251 aa).

This sequence belongs to the methyltransferase superfamily.

It catalyses the reaction malonyl-[ACP] + S-adenosyl-L-methionine = malonyl-[ACP] methyl ester + S-adenosyl-L-homocysteine. Its pathway is cofactor biosynthesis; biotin biosynthesis. Functionally, converts the free carboxyl group of a malonyl-thioester to its methyl ester by transfer of a methyl group from S-adenosyl-L-methionine (SAM). It allows to synthesize pimeloyl-ACP via the fatty acid synthetic pathway. The sequence is that of Malonyl-[acyl-carrier protein] O-methyltransferase from Enterobacter lignolyticus (strain SCF1).